The chain runs to 263 residues: uncharacterized protein (263 aa).

Position 31–38 (31–38) interacts with ATP; sequence GPTGSGKT.

This sequence belongs to the CbbQ/NirQ/NorQ/GpvN family.

This is an uncharacterized protein from Staphylococcus saprophyticus subsp. saprophyticus (strain ATCC 15305 / DSM 20229 / NCIMB 8711 / NCTC 7292 / S-41).